The sequence spans 262 residues: Putative cysteine-rich repeat secretory protein 24 (262 aa).

A signal peptide spans 1 to 29 (MSLSSSVTKHLISASILAIVAMQLPSVHS). 2 consecutive Gnk2-homologous domains span residues 39–141 (YLHH…SIYT) and 147–259 (YKNN…LYPF).

It belongs to the cysteine-rich repeat secretory protein family.

It is found in the secreted. The polypeptide is Putative cysteine-rich repeat secretory protein 24 (CRRSP24) (Arabidopsis thaliana (Mouse-ear cress)).